The chain runs to 310 residues: D-erythrulose 1-phosphate 3-epimerase (310 aa).

The catalysed reaction is D-erythrulose 1-phosphate = L-erythrulose 1-phosphate. The protein operates within carbohydrate metabolism; erythritol degradation. In terms of biological role, catalyzes the racemization of D-erythrulose 1-phosphate to L-erythrulose 1-phosphate. This Brucella abortus (strain 2308) protein is D-erythrulose 1-phosphate 3-epimerase.